A 680-amino-acid chain; its full sequence is DNA ligase (680 aa).

Residues 35-39, 84-85, and glutamate 115 contribute to the NAD(+) site; these read DAQYD and SL. Residue lysine 117 is the N6-AMP-lysine intermediate of the active site. The NAD(+) site is built by arginine 138, glutamate 174, lysine 291, and lysine 315. Zn(2+) is bound by residues cysteine 419, cysteine 422, cysteine 437, and cysteine 442. The BRCT domain maps to 601–680; it reads NKNMPFSGME…REFINMLEQS (80 aa).

It belongs to the NAD-dependent DNA ligase family. LigA subfamily. The cofactor is Mg(2+). It depends on Mn(2+) as a cofactor.

The enzyme catalyses NAD(+) + (deoxyribonucleotide)n-3'-hydroxyl + 5'-phospho-(deoxyribonucleotide)m = (deoxyribonucleotide)n+m + AMP + beta-nicotinamide D-nucleotide.. Functionally, DNA ligase that catalyzes the formation of phosphodiester linkages between 5'-phosphoryl and 3'-hydroxyl groups in double-stranded DNA using NAD as a coenzyme and as the energy source for the reaction. It is essential for DNA replication and repair of damaged DNA. The sequence is that of DNA ligase from Dehalococcoides mccartyi (strain ATCC BAA-2100 / JCM 16839 / KCTC 5957 / BAV1).